A 314-amino-acid chain; its full sequence is CBASS oligonucleotide cyclase CdnC (314 aa).

An ATP-binding site is contributed by K60. Positions 73 and 75 each coordinate Mg(2+). ATP contacts are provided by residues D75, K186, 197-199 (KSF), and N263.

This sequence belongs to the CD-NTase family. C01 subfamily. Forms complexes with Cap7 with 1:1 and 2:2 stoichimetry, and a 1:1:6 CdnC:Cap7:Cap6 complex. Mg(2+) serves as cofactor.

In terms of biological role, cyclic nucleotide synthase (second messenger synthase) of a CBASS antivirus system. CBASS (cyclic oligonucleotide-based antiphage signaling system) provides immunity against bacteriophage. The CD-NTase protein synthesizes cyclic nucleotides in response to infection; these serve as specific second messenger signals. The signals activate a diverse range of effectors, leading to bacterial cell death and thus abortive phage infection. A type III CBASS system. Expression of this CBASS system (Cap18-Cap6-Cap7-CdnC-CapW-Cap17) in a susceptible E.coli (strain MG1655) confers resistance to bacteriophage P1. Probable cyclic nucleotide synthase that upon activation catalyzes the synthesis of a cyclic nucleotide. A cyclase activity for this enzyme was not identified in. The chain is CBASS oligonucleotide cyclase CdnC from Escherichia coli (strain KTE188).